The chain runs to 381 residues: MDEPPDESLNHENTTRAPDNEKNNIEGAGQALHRGSEHAGVGSSEPTGDKVSGQANAGSRQTGRRTSEEAEQRSSQPTEHRLPGHAERRASQQAERRLSERRTSQPPNQQLPSHSERKTSGKIDGQESLLSEQTDQETSEFDDLIPSASTDYLSARSQQQEYNQHGYWTEDSSDPHRLSEDLEKDYTRVKHITEKQAGYRSYYKTLAHIESRTLTDTNDYRETGQRLQPCTFEDSEAELPSKVSTTEETESATTIQAYNTQDTELTTSTSHEKLPSITTKVYYSSSPEKIQTTEYTSDTTPVFDQGRSSQRSSQSSRWRFPPIVFEDPYHVALRYVEKHNILHIFQQITENLVYERPDDPLYFMLDQVQNMIKHRDERQSD.

2 disordered regions span residues 1–176 and 292–317; these read MDEP…SDPH and TTEY…QSSR. Basic and acidic residues-rich tracts occupy residues 8–24 and 65–103; these read SLNH…EKNN and RTSE…ERRT. Over residues 104-113 the composition is skewed to polar residues; that stretch reads SQPPNQQLPS. The span at 114–125 shows a compositional bias: basic and acidic residues; sequence HSERKTSGKIDG. A compositionally biased stretch (acidic residues) spans 134-143; it reads TDQETSEFDD. Composition is skewed to polar residues over residues 147–163 and 292–302; these read SAST…QEYN and TTEYTSDTTPV. The span at 307-317 shows a compositional bias: low complexity; the sequence is RSSQRSSQSSR.

Testis-specific.

It localises to the nucleus. This is Testis-specific expressed protein 55 from Mus musculus (Mouse).